Reading from the N-terminus, the 404-residue chain is MSTEEIIQRTRLLDSEIKIMKSEVLRVTHELQAMRDKIKENSEKIKVNKTLPYLVSNVIELLDVDPNDQEEDGANIDLDSQRKGKCAVIKTSTRQTYFLPVIGLVDAEKLKPGDLVGVNKDSYLILETLPTEYDSRVKAMEVDERPTEQYSDIGGLDKQIQELVEAIVLPMNHKEKFENLGIQPPKGVLMYGPPGTGKTLLARACAAQTKATFLKLAGPQLVQMFIGDGAKLVRDAFSLAKEKAPSIIFIDELDAIGNKRFDSEKAGDREVQRTMLELLNQLDGFQPTTQVKVIAATNRVDILDPALLRSGRLDRKIEFPMPNEEARARIMQIHSRKMNVSPDVNYEELARCTDDFNGAQCKAVCVEAGIIALRRGATELTHEDYMEGILEVQAKKKANLQYYA.

An ATP-binding site is contributed by 192–199 (GPPGTGKT).

The protein belongs to the AAA ATPase family. In terms of assembly, may form a heterodimer with a related family member.

The protein resides in the cytoplasm. The protein localises to the nucleus. Its function is as follows. The 26S proteasome is involved in the ATP-dependent degradation of ubiquitinated proteins. The regulatory (or ATPase) complex confers ATP dependency and substrate specificity to the 26S complex. The sequence is that of 26S proteasome regulatory subunit 6A-B (psmc3-b) from Xenopus laevis (African clawed frog).